A 572-amino-acid chain; its full sequence is Squalene synthase (572 aa).

Transmembrane regions (helical) follow at residues 316 to 336 (SVFN…ELMF) and 492 to 512 (FFLI…LITW).

It belongs to the phytoene/squalene synthase family. Monomer. It depends on Mg(2+) as a cofactor.

The protein resides in the endoplasmic reticulum membrane. It catalyses the reaction 2 (2E,6E)-farnesyl diphosphate + NADPH + H(+) = squalene + 2 diphosphate + NADP(+). The enzyme catalyses 2 (2E,6E)-farnesyl diphosphate + NADH + H(+) = squalene + 2 diphosphate + NAD(+). The protein operates within terpene metabolism; lanosterol biosynthesis; lanosterol from farnesyl diphosphate: step 1/3. Its function is as follows. Catalyzes the condensation of 2 two farnesyl pyrophosphate moieties to form squalene. It is the first committed enzyme of the sterol biosynthesis pathway. Required for the biosynthesis of ergosterol. The sequence is that of Squalene synthase (ERG9) from Mycosarcoma maydis (Corn smut fungus).